Reading from the N-terminus, the 471-residue chain is 3-isopropylmalate dehydratase large subunit (471 aa).

[4Fe-4S] cluster-binding residues include Cys347, Cys407, and Cys410.

Belongs to the aconitase/IPM isomerase family. LeuC type 1 subfamily. Heterodimer of LeuC and LeuD. [4Fe-4S] cluster is required as a cofactor.

The enzyme catalyses (2R,3S)-3-isopropylmalate = (2S)-2-isopropylmalate. Its pathway is amino-acid biosynthesis; L-leucine biosynthesis; L-leucine from 3-methyl-2-oxobutanoate: step 2/4. Functionally, catalyzes the isomerization between 2-isopropylmalate and 3-isopropylmalate, via the formation of 2-isopropylmaleate. The protein is 3-isopropylmalate dehydratase large subunit of Geobacillus sp. (strain WCH70).